A 289-amino-acid polypeptide reads, in one-letter code: ATP synthase gamma chain (289 aa).

It belongs to the ATPase gamma chain family. In terms of assembly, F-type ATPases have 2 components, CF(1) - the catalytic core - and CF(0) - the membrane proton channel. CF(1) has five subunits: alpha(3), beta(3), gamma(1), delta(1), epsilon(1). CF(0) has three main subunits: a, b and c.

Its subcellular location is the cell inner membrane. Produces ATP from ADP in the presence of a proton gradient across the membrane. The gamma chain is believed to be important in regulating ATPase activity and the flow of protons through the CF(0) complex. In Polynucleobacter asymbioticus (strain DSM 18221 / CIP 109841 / QLW-P1DMWA-1) (Polynucleobacter necessarius subsp. asymbioticus), this protein is ATP synthase gamma chain.